The chain runs to 80 residues: Small ribosomal subunit protein uS17 (80 aa).

It belongs to the universal ribosomal protein uS17 family. As to quaternary structure, part of the 30S ribosomal subunit.

Its function is as follows. One of the primary rRNA binding proteins, it binds specifically to the 5'-end of 16S ribosomal RNA. This Brucella abortus (strain S19) protein is Small ribosomal subunit protein uS17.